Here is a 96-residue protein sequence, read N- to C-terminus: Glutamyl-tRNA(Gln) amidotransferase subunit C (96 aa).

This sequence belongs to the GatC family. Heterotrimer of A, B and C subunits.

The enzyme catalyses L-glutamyl-tRNA(Gln) + L-glutamine + ATP + H2O = L-glutaminyl-tRNA(Gln) + L-glutamate + ADP + phosphate + H(+). The catalysed reaction is L-aspartyl-tRNA(Asn) + L-glutamine + ATP + H2O = L-asparaginyl-tRNA(Asn) + L-glutamate + ADP + phosphate + 2 H(+). In terms of biological role, allows the formation of correctly charged Asn-tRNA(Asn) or Gln-tRNA(Gln) through the transamidation of misacylated Asp-tRNA(Asn) or Glu-tRNA(Gln) in organisms which lack either or both of asparaginyl-tRNA or glutaminyl-tRNA synthetases. The reaction takes place in the presence of glutamine and ATP through an activated phospho-Asp-tRNA(Asn) or phospho-Glu-tRNA(Gln). This is Glutamyl-tRNA(Gln) amidotransferase subunit C from Neisseria meningitidis serogroup A / serotype 4A (strain DSM 15465 / Z2491).